The primary structure comprises 432 residues: 5-methylthioadenosine/S-adenosylhomocysteine deaminase (432 aa).

Residues His-62 and His-64 each contribute to the Zn(2+) site. The substrate site is built by Glu-91 and His-184. His-211 is a Zn(2+) binding site. The substrate site is built by Glu-214 and Asp-299. Asp-299 is a Zn(2+) binding site.

It belongs to the metallo-dependent hydrolases superfamily. MTA/SAH deaminase family. Zn(2+) is required as a cofactor.

It carries out the reaction S-adenosyl-L-homocysteine + H2O + H(+) = S-inosyl-L-homocysteine + NH4(+). The catalysed reaction is S-methyl-5'-thioadenosine + H2O + H(+) = S-methyl-5'-thioinosine + NH4(+). Its function is as follows. Catalyzes the deamination of 5-methylthioadenosine and S-adenosyl-L-homocysteine into 5-methylthioinosine and S-inosyl-L-homocysteine, respectively. Is also able to deaminate adenosine. The polypeptide is 5-methylthioadenosine/S-adenosylhomocysteine deaminase (Haloarcula marismortui (strain ATCC 43049 / DSM 3752 / JCM 8966 / VKM B-1809) (Halobacterium marismortui)).